The sequence spans 386 residues: Lipoyl synthase, mitochondrial (386 aa).

Residues 1–48 (MHGRRHLAASLTRALTQAPSRSISSTPSLLQTLDPSVPSPSPPPAAEP) form a disordered region. Residues 13-34 (RALTQAPSRSISSTPSLLQTLD) show a composition bias toward polar residues. The segment covering 37–46 (VPSPSPPPAA) has biased composition (pro residues). [4Fe-4S] cluster is bound by residues Cys-113, Cys-118, Cys-124, Cys-144, Cys-148, Cys-151, and Ser-360. A Radical SAM core domain is found at 129–349 (ETGTATATIM…RALGVEMGFR (221 aa)).

It belongs to the radical SAM superfamily. Lipoyl synthase family. It depends on [4Fe-4S] cluster as a cofactor.

Its subcellular location is the mitochondrion. The enzyme catalyses [[Fe-S] cluster scaffold protein carrying a second [4Fe-4S](2+) cluster] + N(6)-octanoyl-L-lysyl-[protein] + 2 oxidized [2Fe-2S]-[ferredoxin] + 2 S-adenosyl-L-methionine + 4 H(+) = [[Fe-S] cluster scaffold protein] + N(6)-[(R)-dihydrolipoyl]-L-lysyl-[protein] + 4 Fe(3+) + 2 hydrogen sulfide + 2 5'-deoxyadenosine + 2 L-methionine + 2 reduced [2Fe-2S]-[ferredoxin]. Its pathway is protein modification; protein lipoylation via endogenous pathway; protein N(6)-(lipoyl)lysine from octanoyl-[acyl-carrier-protein]: step 2/2. Functionally, catalyzes the radical-mediated insertion of two sulfur atoms into the C-6 and C-8 positions of the octanoyl moiety bound to the lipoyl domains of lipoate-dependent enzymes, thereby converting the octanoylated domains into lipoylated derivatives. This is Lipoyl synthase, mitochondrial from Sorghum bicolor (Sorghum).